The following is a 276-amino-acid chain: MNSLQALIEQAFENRQNLSLDTASSDLINAINEVLSGLDNGQFRVAEKINGEWTVHQWLKKAVLLSFKLFPNQIIDAGFCQFYDKIPLKYTDCSNEQFSQSGVRVVPHGMVRRGAYIAKNTVLMPSYVNIGAYIDEGVMVDTWATVGSCAQIGKNVHISGGAGIGGVLEPLQANPTIIEDNCFIGARSEIVEGVIVEKNSVISMGVFLGQSTKIYNRITGEVSYGRIPAGSVVVAGNLPSHDGSHSLYCAVIVKQVDEKTRAKVSINDLLRANQDD.

Residues R104 and D141 each coordinate substrate.

Belongs to the transferase hexapeptide repeat family. As to quaternary structure, homotrimer.

It is found in the cytoplasm. It carries out the reaction (S)-2,3,4,5-tetrahydrodipicolinate + succinyl-CoA + H2O = (S)-2-succinylamino-6-oxoheptanedioate + CoA. The protein operates within amino-acid biosynthesis; L-lysine biosynthesis via DAP pathway; LL-2,6-diaminopimelate from (S)-tetrahydrodipicolinate (succinylase route): step 1/3. This Legionella pneumophila (strain Corby) protein is 2,3,4,5-tetrahydropyridine-2,6-dicarboxylate N-succinyltransferase.